The sequence spans 374 residues: Queuine tRNA-ribosyltransferase (374 aa).

Catalysis depends on D89, which acts as the Proton acceptor. Residues 89-93 (DSGGF), D143, Q187, and G214 contribute to the substrate site. An RNA binding region spans residues 245–251 (GVGKPED). D264 serves as the catalytic Nucleophile. Positions 269-273 (TRNAR) are RNA binding; important for wobble base 34 recognition. Zn(2+) is bound by residues C302, C304, C307, and H333.

It belongs to the queuine tRNA-ribosyltransferase family. In terms of assembly, homodimer. Within each dimer, one monomer is responsible for RNA recognition and catalysis, while the other monomer binds to the replacement base PreQ1. Zn(2+) serves as cofactor.

It carries out the reaction 7-aminomethyl-7-carbaguanine + guanosine(34) in tRNA = 7-aminomethyl-7-carbaguanosine(34) in tRNA + guanine. Its pathway is tRNA modification; tRNA-queuosine biosynthesis. Its function is as follows. Catalyzes the base-exchange of a guanine (G) residue with the queuine precursor 7-aminomethyl-7-deazaguanine (PreQ1) at position 34 (anticodon wobble position) in tRNAs with GU(N) anticodons (tRNA-Asp, -Asn, -His and -Tyr). Catalysis occurs through a double-displacement mechanism. The nucleophile active site attacks the C1' of nucleotide 34 to detach the guanine base from the RNA, forming a covalent enzyme-RNA intermediate. The proton acceptor active site deprotonates the incoming PreQ1, allowing a nucleophilic attack on the C1' of the ribose to form the product. After dissociation, two additional enzymatic reactions on the tRNA convert PreQ1 to queuine (Q), resulting in the hypermodified nucleoside queuosine (7-(((4,5-cis-dihydroxy-2-cyclopenten-1-yl)amino)methyl)-7-deazaguanosine). The polypeptide is Queuine tRNA-ribosyltransferase (Psychromonas ingrahamii (strain DSM 17664 / CCUG 51855 / 37)).